Reading from the N-terminus, the 122-residue chain is Small ribosomal subunit protein uS13 (122 aa).

Positions 91–122 (RHRRGLPVHGQRTKTNARTRKGPKRTVAGKKK) are disordered.

This sequence belongs to the universal ribosomal protein uS13 family. Part of the 30S ribosomal subunit. Forms a loose heterodimer with protein S19. Forms two bridges to the 50S subunit in the 70S ribosome.

In terms of biological role, located at the top of the head of the 30S subunit, it contacts several helices of the 16S rRNA. In the 70S ribosome it contacts the 23S rRNA (bridge B1a) and protein L5 of the 50S subunit (bridge B1b), connecting the 2 subunits; these bridges are implicated in subunit movement. Contacts the tRNAs in the A and P-sites. The polypeptide is Small ribosomal subunit protein uS13 (Kocuria rhizophila (strain ATCC 9341 / DSM 348 / NBRC 103217 / DC2201)).